The chain runs to 341 residues: Anthranilate phosphoribosyltransferase (341 aa).

5-phospho-alpha-D-ribose 1-diphosphate contacts are provided by residues Gly83, 86–87 (GD), Thr91, 93–96 (NIST), 111–119 (KHGNRGVSS), and Ser123. Gly83 serves as a coordination point for anthranilate. Position 95 (Ser95) interacts with Mg(2+). Asn114 is an anthranilate binding site. Arg169 lines the anthranilate pocket. Positions 228 and 229 each coordinate Mg(2+).

The protein belongs to the anthranilate phosphoribosyltransferase family. In terms of assembly, homodimer. Requires Mg(2+) as cofactor.

It carries out the reaction N-(5-phospho-beta-D-ribosyl)anthranilate + diphosphate = 5-phospho-alpha-D-ribose 1-diphosphate + anthranilate. It participates in amino-acid biosynthesis; L-tryptophan biosynthesis; L-tryptophan from chorismate: step 2/5. Catalyzes the transfer of the phosphoribosyl group of 5-phosphorylribose-1-pyrophosphate (PRPP) to anthranilate to yield N-(5'-phosphoribosyl)-anthranilate (PRA). The polypeptide is Anthranilate phosphoribosyltransferase (Cupriavidus necator (strain ATCC 17699 / DSM 428 / KCTC 22496 / NCIMB 10442 / H16 / Stanier 337) (Ralstonia eutropha)).